The sequence spans 285 residues: HTH-type transcriptional regulator MurR (285 aa).

The region spanning 1–77 (MLYLTKIRNA…MALIGEYSAS (77 aa)) is the HTH rpiR-type domain. Positions 37 to 56 (SRQMAKQLGISQSSIVKFAQ) form a DNA-binding region, H-T-H motif. An SIS domain is found at 128-268 (IIEVISKAPF…FVGLVQLNDV (141 aa)).

In terms of assembly, homotetramer.

It functions in the pathway amino-sugar metabolism; N-acetylmuramate degradation [regulation]. Represses the expression of the murPQ operon involved in the uptake and degradation of N-acetylmuramic acid (MurNAc). Binds to two adjacent inverted repeats within the operator region. MurNAc 6-phosphate, the substrate of MurQ, is the specific inducer that weakens binding of MurR to the operator. The sequence is that of HTH-type transcriptional regulator MurR from Escherichia coli (strain ATCC 8739 / DSM 1576 / NBRC 3972 / NCIMB 8545 / WDCM 00012 / Crooks).